The sequence spans 68 residues: Large ribosomal subunit protein uL29 (68 aa).

This sequence belongs to the universal ribosomal protein uL29 family.

The protein is Large ribosomal subunit protein uL29 of Limosilactobacillus reuteri (strain DSM 20016) (Lactobacillus reuteri).